A 210-amino-acid polypeptide reads, in one-letter code: Large ribosomal subunit protein uL3 (210 aa).

Residues 131-140 are compositionally biased toward polar residues; the sequence is NRASHGNSLS. A disordered region spans residues 131–150; it reads NRASHGNSLSHRAPGSIGCR. Glutamine 151 carries the post-translational modification N5-methylglutamine.

Belongs to the universal ribosomal protein uL3 family. Part of the 50S ribosomal subunit. Forms a cluster with proteins L14 and L19. Methylated by PrmB.

In terms of biological role, one of the primary rRNA binding proteins, it binds directly near the 3'-end of the 23S rRNA, where it nucleates assembly of the 50S subunit. The chain is Large ribosomal subunit protein uL3 from Acidithiobacillus ferrooxidans (strain ATCC 23270 / DSM 14882 / CIP 104768 / NCIMB 8455) (Ferrobacillus ferrooxidans (strain ATCC 23270)).